The primary structure comprises 69 residues: Large ribosomal subunit protein uL29 (69 aa).

This sequence belongs to the universal ribosomal protein uL29 family.

This chain is Large ribosomal subunit protein uL29, found in Carboxydothermus hydrogenoformans (strain ATCC BAA-161 / DSM 6008 / Z-2901).